Reading from the N-terminus, the 230-residue chain is tRNA (cytidine-2'-O-)-methyltransferase TrmJ (230 aa).

Residues 79–81, G115, I135, and 142–144 contribute to the S-adenosyl-L-methionine site; these read TSG and PIM.

The protein belongs to the class IV-like SAM-binding methyltransferase superfamily. RNA methyltransferase TrmH family. Homodimer.

The protein localises to the cytoplasm. It catalyses the reaction cytidine(32) in tRNA + S-adenosyl-L-methionine = 2'-O-methylcytidine(32) in tRNA + S-adenosyl-L-homocysteine + H(+). Catalyzes the formation of 2'O-methylated cytidine (Cm32) at position 32 in tRNA. The polypeptide is tRNA (cytidine-2'-O-)-methyltransferase TrmJ (Methanocaldococcus jannaschii (strain ATCC 43067 / DSM 2661 / JAL-1 / JCM 10045 / NBRC 100440) (Methanococcus jannaschii)).